The sequence spans 125 residues: Small ribosomal subunit protein bS6 (125 aa).

The disordered stretch occupies residues 97–125 (TEASPMKAAKEERKPLAEVENNDFEDAEE). The span at 104–113 (AAKEERKPLA) shows a compositional bias: basic and acidic residues. Acidic residues predominate over residues 116–125 (ENNDFEDAEE).

The protein belongs to the bacterial ribosomal protein bS6 family.

Functionally, binds together with bS18 to 16S ribosomal RNA. This Haemophilus influenzae (strain PittEE) protein is Small ribosomal subunit protein bS6.